Consider the following 445-residue polypeptide: Histamine H3 receptor (445 aa).

At 1 to 40 (MERAPPDGLMNASGALAGEAAAAAGGARTFSAAWTAVLAA) the chain is on the extracellular side. N-linked (GlcNAc...) asparagine glycosylation is present at Asn11. A helical membrane pass occupies residues 41 to 61 (LMALLIVATVLGNALVMLAFV). Over 62-71 (ADSSLRTQNN) the chain is Cytoplasmic. Residues 72 to 92 (FFLLNLAISDFLVGVFCIPLY) traverse the membrane as a helical segment. Topologically, residues 93–109 (VPYVLTGRWTFGRGLCK) are extracellular. Cys108 and Cys189 are joined by a disulfide. The helical transmembrane segment at 110-130 (LWLVVDYLLCTSSVFNIVLIS) threads the bilayer. The Cytoplasmic portion of the chain corresponds to 131-157 (YDRFLSVTRAVSYRAQQGDTRRAVRKM). A helical membrane pass occupies residues 158–178 (VLVWVLAFLLYGPAILSWEYL). Residues 179 to 197 (SGGSSIPEGHCYAEFFYNW) lie on the Extracellular side of the membrane. The helical transmembrane segment at 198–218 (YFLITASTLEFFTPFLSVTFF) threads the bilayer. Topologically, residues 219–359 (NLSIYLNIQR…LSRDKKVAKS (141 aa)) are cytoplasmic. 2 disordered regions span residues 236–264 (GGAREAGPDPLPEAQSSPPQPPPGCWGCW) and 288–336 (AGEA…LEKR). Positions 299-312 (AAASPTSSSGSSSR) are enriched in low complexity. The helical transmembrane segment at 360–380 (LAIIVSIFGLCWAPYTLLMII) threads the bilayer. The Extracellular segment spans residues 381–398 (RAACHGHCVPDYWYETSF). A helical membrane pass occupies residues 399–419 (WLLWANSAVNPVLYPLCHYSF). The Cytoplasmic segment spans residues 420–445 (RRAFTKLLCPQKLKVQPHSSLEHCWK). Position 439 is a phosphoserine (Ser439).

This sequence belongs to the G-protein coupled receptor 1 family. As to expression, expressed widely and abundantly throughout the brain. Highly expressed in discrete neuronal populations such as pyramidal cells in cerebral cortex or cerebellar Purkinje cells.

The protein localises to the cell membrane. Its function is as follows. The H3 subclass of histamine receptors could mediate the histamine signals in CNS and peripheral nervous system. Signals through the inhibition of adenylate cyclase and displays high constitutive activity (spontaneous activity in the absence of agonist). This chain is Histamine H3 receptor (HRH3), found in Cavia porcellus (Guinea pig).